The primary structure comprises 2948 residues: Transforming acidic coiled-coil-containing protein 2 (2948 aa).

Polar residues predominate over residues 1–30 (MGNENSTSDNQRTLSAQTPRSAQPPGNSQN). 15 disordered regions span residues 1–304 (MGNE…TDDL), 314–333 (RSNS…QESC), 392–453 (AAGG…MPVS), 465–785 (LVGL…PQGE), 825–964 (SSEK…VSPP), 985–1050 (CTGQ…QPDS), 1062–1154 (ALAP…GEAT), 1243–1274 (AAQR…VGEP), 1296–1400 (QPGA…EQIA), 1427–1463 (PGEK…VTLL), 1493–1661 (ASDK…GERR), 1675–1705 (LGNQ…AGEA), 1741–1878 (VLPG…ESPT), 1907–2035 (HAGL…SSGT), and 2052–2460 (LEPR…ETPP). Basic and acidic residues predominate over residues 174-184 (GRERQPKEEGQ). Phosphoserine is present on residues S197, S201, and S269. Phosphothreonine is present on V325. The residue at position 493 (S493) is a Phosphoserine. Positions 496-507 (ERGEHLNTEQSH) are enriched in basic and acidic residues. Phosphoserine is present on residues S561, S571, and S575. Residues 604–629 (SKRDPEVGKDELSKPSSDAESRDHPS) are compositionally biased toward basic and acidic residues. Position 758 is a phosphoserine (S758). Residues 911–926 (SDTPTSSPTDMVWESS) show a composition bias toward low complexity. S962 carries the phosphoserine modification. Residues 985-996 (CTGQGPNKSQQA) show a composition bias toward polar residues. S1025 carries the post-translational modification Phosphoserine. Residues S1267 and S1313 each carry the phosphoserine modification. Over residues 1348-1357 (ATAPGAGAKA) the composition is skewed to low complexity. The segment covering 1383-1400 (DPKQGTSGGVDTSSEQIA) has biased composition (polar residues). At S1562 the chain carries Phosphoserine. Composition is skewed to basic and acidic residues over residues 1801-1823 (DETH…RESP) and 1834-1854 (PKKD…RGAE). Over residues 1862 to 1873 (ADDIIQPAAPAD) the composition is skewed to low complexity. Residues 1939-1948 (PAKDLSRSSD) show a composition bias toward basic and acidic residues. Positions 1963–1976 (KAPPAPPPPPPEVI) are enriched in pro residues. Phosphoserine is present on S2072. A compositionally biased stretch (polar residues) spans 2074–2102 (DSVPISKSTLSRSLSLQASDFDGASSSGN). The segment covering 2114–2124 (STGSSSASSTL) has biased composition (low complexity). Over residues 2125 to 2141 (KRTKKPRPPSLKKKQTT) the composition is skewed to basic residues. A phosphoserine mark is found at S2161 and S2226. Phosphothreonine is present on T2246. S2256 carries the phosphoserine modification. Basic and acidic residues predominate over residues 2265-2275 (LEFDYSEDKSS). Residues 2288 to 2305 (KIGKKPVAKMPLRRPKMK) are compositionally biased toward basic residues. Residues 2315 to 2403 (PASPPRSPAE…SPASFEIPAS (89 aa)) form the SPAZ domain. A phosphoserine mark is found at S2317, S2321, S2359, S2389, S2392, S2394, and S2403. Over residues 2348-2368 (NPFSSTSKMQESPKLPQQSYN) the composition is skewed to polar residues. Low complexity predominate over residues 2382–2395 (KTSSKTPSSPSKSP). 4 positions are modified to phosphothreonine: T2430, T2451, T2455, and T2458. Phosphoserine occurs at positions 2512 and 2534. T2553 bears the Phosphothreonine mark. The segment at 2555–2577 (QESPVKSSPVRMSESPTPCSGSS) is disordered. S2557 and S2569 each carry phosphoserine. A compositionally biased stretch (polar residues) spans 2568–2577 (ESPTPCSGSS). T2625 carries the phosphothreonine modification. Coiled coils occupy residues 2675–2703 (AQKL…LASR) and 2746–2947 (DLDS…KMGK).

Belongs to the TACC family. Interacts with CCDC100/CEP120. Interacts with microtubules. Interacts with YEATS4, GCN5L2 and PCAF. In terms of processing, phosphorylated by TTK; which is required for localization in centrosome. In terms of tissue distribution, strongly expressed in heart, skeletal muscle, brain, prostate, thyroid and trachea.

It is found in the cytoplasm. It localises to the nucleus. The protein localises to the cytoskeleton. The protein resides in the microtubule organizing center. Its subcellular location is the centrosome. In terms of biological role, plays a role in the microtubule-dependent coupling of the nucleus and the centrosome. Involved in the processes that regulate centrosome-mediated interkinetic nuclear migration (INM) of neural progenitors. May play a role in organizing centrosomal microtubules. May act as a tumor suppressor protein. May represent a tumor progression marker. The sequence is that of Transforming acidic coiled-coil-containing protein 2 (TACC2) from Homo sapiens (Human).